The following is a 453-amino-acid chain: Potassium/proton antiporter CemA (453 aa).

Helical transmembrane passes span 235–255 (YMAC…IIFL), 328–348 (ICTI…ACLL), 378–398 (ILLL…EIII), and 414–434 (VSCF…YWIF).

It belongs to the CemA family.

Its subcellular location is the plastid. The protein localises to the chloroplast inner membrane. It catalyses the reaction K(+)(in) + H(+)(out) = K(+)(out) + H(+)(in). In terms of biological role, contributes to K(+)/H(+) antiport activity by supporting proton efflux to control proton extrusion and homeostasis in chloroplasts in a light-dependent manner to modulate photosynthesis. Prevents excessive induction of non-photochemical quenching (NPQ) under continuous-light conditions. Indirectly promotes efficient inorganic carbon uptake into chloroplasts. The chain is Potassium/proton antiporter CemA from Zygnema circumcarinatum (Green alga).